Reading from the N-terminus, the 549-residue chain is Glucose-6-phosphate isomerase (549 aa).

Catalysis depends on glutamate 353, which acts as the Proton donor. Active-site residues include histidine 384 and lysine 513.

Belongs to the GPI family.

It is found in the cytoplasm. It catalyses the reaction alpha-D-glucose 6-phosphate = beta-D-fructose 6-phosphate. It functions in the pathway carbohydrate biosynthesis; gluconeogenesis. It participates in carbohydrate degradation; glycolysis; D-glyceraldehyde 3-phosphate and glycerone phosphate from D-glucose: step 2/4. In terms of biological role, catalyzes the reversible isomerization of glucose-6-phosphate to fructose-6-phosphate. The protein is Glucose-6-phosphate isomerase of Brucella canis (strain ATCC 23365 / NCTC 10854 / RM-666).